The chain runs to 144 residues: Large ribosomal subunit protein uL13 (144 aa).

It belongs to the universal ribosomal protein uL13 family. As to quaternary structure, part of the 50S ribosomal subunit.

Functionally, this protein is one of the early assembly proteins of the 50S ribosomal subunit, although it is not seen to bind rRNA by itself. It is important during the early stages of 50S assembly. This chain is Large ribosomal subunit protein uL13, found in Oleidesulfovibrio alaskensis (strain ATCC BAA-1058 / DSM 17464 / G20) (Desulfovibrio alaskensis).